The sequence spans 401 residues: Adaptive-response sensory kinase SasA (401 aa).

Residues 175–400 (MLVHDLRNPL…WFHFTLPVYP (226 aa)) form the Histidine kinase domain. H178 carries the post-translational modification Phosphohistidine; by autocatalysis.

Homooligomerizes. Interacts with KaiC. Participates in the KaiABC clock complex, whose core is composed of a KaiC homohexamer, 6 KaiB and up to 6 KaiA dimers. SasA and KaiB(fs) compete to bind to KaiC.

The enzyme catalyses ATP + protein L-histidine = ADP + protein N-phospho-L-histidine.. Member of the two-component regulatory system SasA/RpaA involved in genome-wide circadian gene expression. One of several clock output pathways. Participates in the Kai clock protein complex, the main circadian regulator in cyanobacteria, via its interaction with KaiC. KaiC enhances the autophosphorylation activity of SasA, which then transfers its phosphate group to RpaA to activate it. In addition to its output function, recruits fold-shifted KaiB (KaiB(fs)) to KaiC to cooperatively form the KaiB(6):KaiC(6) complex (independent of SasA kinase activity). Required for robustness of the circadian rhythm of gene expression and is involved in clock output, also required for adaptation to light/dark cycles. The sequence is that of Adaptive-response sensory kinase SasA from Nostoc sp. (strain PCC 7120 / SAG 25.82 / UTEX 2576).